A 334-amino-acid chain; its full sequence is Formamidase (334 aa).

One can recognise a CN hydrolase domain in the interval 14–260 (FLVAAIQFPV…WEIVTGEIYP (247 aa)). The active-site Proton acceptor is the glutamate 60. Lysine 133 acts as the Proton donor in catalysis. Cysteine 166 functions as the Nucleophile in the catalytic mechanism.

This sequence belongs to the carbon-nitrogen hydrolase superfamily. Aliphatic amidase family.

It carries out the reaction formamide + H2O = formate + NH4(+). Is an aliphatic amidase with a restricted substrate specificity, as it only hydrolyzes formamide. The polypeptide is Formamidase (Helicobacter acinonychis (strain Sheeba)).